Reading from the N-terminus, the 751-residue chain is Semaphorin-3C (751 aa).

Residues 1–21 (MAFRTICVLVGVFICSICVKG) form the signal peptide. The Sema domain maps to 28 to 511 (RVYLTFDELR…SNEGVSQVSL (484 aa)). An N-linked (GlcNAc...) asparagine glycan is attached at asparagine 81. Cysteine 101 and cysteine 112 are oxidised to a cystine. N-linked (GlcNAc...) asparagine glycosylation occurs at asparagine 123. A disulfide bridge connects residues cysteine 130 and cysteine 139. N-linked (GlcNAc...) asparagine glycans are attached at residues asparagine 252 and asparagine 268. Disulfide bonds link cysteine 266-cysteine 378 and cysteine 290-cysteine 338. Asparagine 465 is a glycosylation site (N-linked (GlcNAc...) asparagine). Cysteines 514 and 532 form a disulfide. Positions 571-655 (AYRNAAEIVQ…TENSFKQTIA (85 aa)) constitute an Ig-like C2-type domain. Asparagine 585 and asparagine 586 each carry an N-linked (GlcNAc...) asparagine glycan. A disulfide bridge links cysteine 592 with cysteine 643. A compositionally biased stretch (basic and acidic residues) spans 712-731 (TRQQHQQGDESQKMRGDYGK). The disordered stretch occupies residues 712–751 (TRQQHQQGDESQKMRGDYGKLKALINSRKSRNRRNQLPES).

It belongs to the semaphorin family. As to quaternary structure, interacts with PLXND1.

The protein resides in the secreted. Binds to plexin family members and plays an important role in the regulation of developmental processes. Required for normal cardiovascular development during embryogenesis. Functions as attractant for growing axons, and thereby plays an important role in axon growth and axon guidance. This is Semaphorin-3C (SEMA3C) from Pongo abelii (Sumatran orangutan).